The chain runs to 156 residues: Small ribosomal subunit protein uS7 (156 aa).

This sequence belongs to the universal ribosomal protein uS7 family. In terms of assembly, part of the 30S ribosomal subunit. Contacts proteins S9 and S11.

One of the primary rRNA binding proteins, it binds directly to 16S rRNA where it nucleates assembly of the head domain of the 30S subunit. Is located at the subunit interface close to the decoding center, probably blocks exit of the E-site tRNA. This Thermosynechococcus vestitus (strain NIES-2133 / IAM M-273 / BP-1) protein is Small ribosomal subunit protein uS7.